The sequence spans 363 residues: Pyrimidine monooxygenase RutA (363 aa).

FMN-binding positions include 49 to 50 (IK), Asn-115, Glu-124, 140 to 141 (RY), and Ser-190.

Belongs to the NtaA/SnaA/DszA monooxygenase family. RutA subfamily.

It carries out the reaction uracil + FMNH2 + NADH + O2 = (Z)-3-ureidoacrylate + FMN + NAD(+) + H2O + H(+). The catalysed reaction is thymine + FMNH2 + NADH + O2 = (Z)-2-methylureidoacrylate + FMN + NAD(+) + H2O + H(+). Catalyzes the pyrimidine ring opening between N-3 and C-4 by an unusual flavin hydroperoxide-catalyzed mechanism, adding oxygen atoms in the process to yield ureidoacrylate peracid, that immediately reacts with FMN forming ureidoacrylate and FMN-N(5)-oxide. The FMN-N(5)-oxide reacts spontaneously with NADH to produce FMN. Requires the flavin reductase RutF to regenerate FMN in vivo. The sequence is that of Pyrimidine monooxygenase RutA from Pantoea ananatis (strain LMG 20103).